Consider the following 434-residue polypeptide: Gamma-enolase (434 aa).

S2 carries the N-acetylserine modification. K5 is modified (N6-acetyllysine). At T26 the chain carries Phosphothreonine. S40 is a binding site for Mg(2+). Y44 carries the post-translational modification Phosphotyrosine. The residue at position 60 (K60) is an N6-acetyllysine; alternate. At K60 the chain carries N6-succinyllysine; alternate. K64 is subject to N6-acetyllysine. The residue at position 89 (K89) is an N6-acetyllysine; alternate. K89 is subject to N6-succinyllysine; alternate. Substrate contacts are provided by H158 and E167. Residues K193, K197, and K199 each carry the N6-acetyllysine modification. The residue at position 202 (K202) is an N6-acetyllysine; alternate. K202 is covalently cross-linked (Glycyl lysine isopeptide (Lys-Gly) (interchain with G-Cter in SUMO2); alternate). Residue E210 is the Proton donor of the active site. An N6-acetyllysine; alternate mark is found at K228 and K233. K228 is modified (N6-succinyllysine; alternate). K233 carries the post-translational modification N6-(2-hydroxyisobutyryl)lysine; alternate. Mg(2+) is bound at residue D245. K256 carries the post-translational modification N6-acetyllysine. S263 carries the post-translational modification Phosphoserine. At Y287 the chain carries Phosphotyrosine. S291 carries the phosphoserine modification. The Mg(2+) site is built by E293 and D318. Substrate-binding residues include E293 and D318. K335 and K343 each carry N6-acetyllysine. K343 (proton acceptor) is an active-site residue. Residues 370–373 and K394 contribute to the substrate site; that span reads SHRS. K406 is modified (N6-acetyllysine).

This sequence belongs to the enolase family. In terms of assembly, mammalian enolase is composed of 3 isozyme subunits, alpha, beta and gamma, which can form homodimers or heterodimers which are cell-type and development-specific. Mg(2+) serves as cofactor. As to expression, skeletal muscle (at protein level). The alpha/alpha homodimer is expressed in embryo and in most adult tissues. The alpha/beta heterodimer and the beta/beta homodimer are found in striated muscle, and the alpha/gamma heterodimer and the gamma/gamma homodimer in neurons.

The protein localises to the cytoplasm. The protein resides in the cell membrane. The catalysed reaction is (2R)-2-phosphoglycerate = phosphoenolpyruvate + H2O. It participates in carbohydrate degradation; glycolysis; pyruvate from D-glyceraldehyde 3-phosphate: step 4/5. In terms of biological role, has neurotrophic and neuroprotective properties on a broad spectrum of central nervous system (CNS) neurons. Binds, in a calcium-dependent manner, to cultured neocortical neurons and promotes cell survival. This chain is Gamma-enolase (Eno2), found in Mus musculus (Mouse).